A 492-amino-acid chain; its full sequence is Bifunctional purine biosynthesis protein PurH (492 aa).

Positions 1–144 (MKKAILSVSN…KNYKHVTTIV (144 aa)) constitute an MGS-like domain.

This sequence belongs to the PurH family.

It catalyses the reaction (6R)-10-formyltetrahydrofolate + 5-amino-1-(5-phospho-beta-D-ribosyl)imidazole-4-carboxamide = 5-formamido-1-(5-phospho-D-ribosyl)imidazole-4-carboxamide + (6S)-5,6,7,8-tetrahydrofolate. The catalysed reaction is IMP + H2O = 5-formamido-1-(5-phospho-D-ribosyl)imidazole-4-carboxamide. It participates in purine metabolism; IMP biosynthesis via de novo pathway; 5-formamido-1-(5-phospho-D-ribosyl)imidazole-4-carboxamide from 5-amino-1-(5-phospho-D-ribosyl)imidazole-4-carboxamide (10-formyl THF route): step 1/1. It functions in the pathway purine metabolism; IMP biosynthesis via de novo pathway; IMP from 5-formamido-1-(5-phospho-D-ribosyl)imidazole-4-carboxamide: step 1/1. The chain is Bifunctional purine biosynthesis protein PurH from Staphylococcus aureus (strain Newman).